We begin with the raw amino-acid sequence, 175 residues long: Crossover junction endodeoxyribonuclease RuvC (175 aa).

Catalysis depends on residues D16, E76, and D148. Mg(2+)-binding residues include D16, E76, and D148.

The protein belongs to the RuvC family. Homodimer which binds Holliday junction (HJ) DNA. The HJ becomes 2-fold symmetrical on binding to RuvC with unstacked arms; it has a different conformation from HJ DNA in complex with RuvA. In the full resolvosome a probable DNA-RuvA(4)-RuvB(12)-RuvC(2) complex forms which resolves the HJ. Mg(2+) serves as cofactor.

It is found in the cytoplasm. The catalysed reaction is Endonucleolytic cleavage at a junction such as a reciprocal single-stranded crossover between two homologous DNA duplexes (Holliday junction).. Functionally, the RuvA-RuvB-RuvC complex processes Holliday junction (HJ) DNA during genetic recombination and DNA repair. Endonuclease that resolves HJ intermediates. Cleaves cruciform DNA by making single-stranded nicks across the HJ at symmetrical positions within the homologous arms, yielding a 5'-phosphate and a 3'-hydroxyl group; requires a central core of homology in the junction. The consensus cleavage sequence is 5'-(A/T)TT(C/G)-3'. Cleavage occurs on the 3'-side of the TT dinucleotide at the point of strand exchange. HJ branch migration catalyzed by RuvA-RuvB allows RuvC to scan DNA until it finds its consensus sequence, where it cleaves and resolves the cruciform DNA. The polypeptide is Crossover junction endodeoxyribonuclease RuvC (Bradyrhizobium sp. (strain BTAi1 / ATCC BAA-1182)).